We begin with the raw amino-acid sequence, 170 residues long: Calcineurin subunit B type 2 (170 aa).

Glycine 2 carries N-myristoyl glycine lipidation. 4 EF-hand domains span residues 18–46, 50–85, 87–122, and 128–163; these read DEIKRLRKRFKKLDLDSSSALSVKEFTSM, QENPLVQRVIDVFDTDGDGQVDFREFILGTSQFSVR, DEEQKLRFAFSIYDMDKDGYISNGELFQVLKMMVGD, and QLQQLVDKTIILLDKDGDGKISFQEFSAVVRSLEIH. Positions 63, 65, 67, 69, 74, 100, 102, 104, 106, and 111 each coordinate Ca(2+). A calcineurin A binding region spans residues 131-136; it reads QLVDKT. 5 residues coordinate Ca(2+): aspartate 141, aspartate 143, aspartate 145, lysine 147, and glutamate 152.

It belongs to the calcineurin regulatory subunit family. In terms of assembly, forms a complex composed of a calmodulin-dependent catalytic subunit (also known as calcineurin A) and a regulatory Ca(2+)-binding subunit (also known as calcineurin B). There are three catalytic subunits, each encoded by a separate gene (PPP3CA, PPP3CB, and PPP3CC) and two regulatory subunits which are also encoded by separate genes (PPP3R1 and PPP3R2). Interacts with SPATA33 (via PQIIIT motif).

The protein localises to the mitochondrion. Regulatory subunit of calcineurin, a calcium-dependent, calmodulin stimulated protein phosphatase. Confers calcium sensitivity. In Bos taurus (Bovine), this protein is Calcineurin subunit B type 2 (PPP3R2).